The primary structure comprises 586 residues: uncharacterized protein (586 aa).

The region spanning 29–312 (YGIAIGSMVV…LARMRISLES (284 aa)) is the ABC transmembrane type-1 domain. The next 4 membrane-spanning stretches (helical) occupy residues 30–50 (GIAIGSMVVVAVMTSASAWIM), 66–86 (VFGVAVTVAIIFAVKGLATYV), 162–184 (MVIQQPLLSLVSAAVGPGAILGV), and 256–276 (IMETLSGFAIAGVIALSGVLV). The ABC transporter domain occupies 346 to 580 (IRFKDVNFSY…DGVYRRLYEL (235 aa)). 379–386 (GPSGAGKS) contacts ATP.

It belongs to the ABC transporter superfamily.

It localises to the cell membrane. This is an uncharacterized protein from Sinorhizobium fredii (strain NBRC 101917 / NGR234).